We begin with the raw amino-acid sequence, 604 residues long: Prostaglandin G/H synthase 2 (604 aa).

The signal sequence occupies residues Met-1–Ala-17. Residues Ala-18–Ser-55 form the EGF-like domain. 4 disulfide bridges follow: Cys-21–Cys-32, Cys-22–Cys-145, Cys-26–Cys-42, and Cys-44–Cys-54. Asn-53 carries N-linked (GlcNAc...) asparagine glycosylation. Residue Arg-106 coordinates substrate. Residue Asn-130 is glycosylated (N-linked (GlcNAc...) asparagine). His-193 (proton acceptor) is an active-site residue. Tyr-341 serves as a coordination point for substrate. Tyr-371 acts as the For cyclooxygenase activity in catalysis. His-374 is a heme b binding site. A glycan (N-linked (GlcNAc...) asparagine) is linked at Asn-396. Residue Cys-526 is modified to S-nitrosocysteine. Cys-555 and Cys-561 form a disulfide bridge. An N-linked (GlcNAc...) asparagine glycan is attached at Asn-580.

This sequence belongs to the prostaglandin G/H synthase family. As to quaternary structure, homodimer. Heme b is required as a cofactor. S-nitrosylation by NOS2 (iNOS) activates enzyme activity. S-nitrosylation may take place on different Cys residues in addition to Cys-526.

Its subcellular location is the microsome membrane. It localises to the endoplasmic reticulum membrane. The protein resides in the nucleus inner membrane. The protein localises to the nucleus outer membrane. The enzyme catalyses (5Z,8Z,11Z,14Z)-eicosatetraenoate + AH2 + 2 O2 = prostaglandin H2 + A + H2O. The catalysed reaction is (5Z,8Z,11Z,14Z)-eicosatetraenoate + 2 O2 = prostaglandin G2. It catalyses the reaction prostaglandin G2 + AH2 = prostaglandin H2 + A + H2O. It carries out the reaction (5Z,8Z,11Z,14Z,17Z)-eicosapentaenoate + 2 O2 = prostaglandin G3. The enzyme catalyses prostaglandin G3 + AH2 = prostaglandin H3 + A + H2O. The catalysed reaction is (8Z,11Z,14Z)-eicosatrienoate + 2 O2 = prostaglandin G1. It catalyses the reaction prostaglandin G1 + AH2 = prostaglandin H1 + A + H2O. It carries out the reaction 2-(5Z,8Z,11Z,14Z)-eicosatetraenoyl-sn-glycero-3-phosphoethanolamine + 2 O2 = 2-(prostaglandin G2)-sn-glycero-3-phosphoethanolamine. The enzyme catalyses 2-(prostaglandin G2)-sn-glycero-3-phosphoethanolamine + AH2 = 2-(prostaglandin H2)-sn-glycero-3-phosphoethanolamine + A + H2O. The catalysed reaction is 2-(5Z,8Z,11Z,14Z)-eicosatetraenoyl-sn-glycero-3-phosphocholine + 2 O2 = 2-(prostaglandin G2)-sn-glycero-3-phosphocholine. It catalyses the reaction 2-(prostaglandin G2)-sn-glycero-3-phosphocholine + AH2 = 2-(prostaglandin H2)-sn-glycero-3-phosphocholine + A + H2O. It carries out the reaction (15S)-hydroperoxy-(5Z,8Z,11Z,13E)-eicosatetraenoate + AH2 = (15S)-hydroxy-(5Z,8Z,11Z,13E)-eicosatetraenoate + A + H2O. The enzyme catalyses 2-(5Z,8Z,11Z,14Z)-eicosatetraenoyl-sn-glycero-3-phosphocholine + AH2 + O2 = 2-[(15S)-hydroxy-(5Z,8Z,11Z,13E)-eicosatetraenoyl]-sn-glycero-3-phosphocholine + A + H2O. The catalysed reaction is 2-(5Z,8Z,11Z,14Z)-eicosatetraenoyl-sn-glycero-3-phosphocholine + AH2 + O2 = 2-[(15R)-hydroxy-(5Z,8Z,11Z,13E)-eicosatetraenoyl]-sn-glycero-3-phosphocholine + A + H2O. It catalyses the reaction 2-(5Z,8Z,11Z,14Z)-eicosatetraenoyl-sn-glycero-3-phosphocholine + AH2 + O2 = 2-[(11R)-hydroxy-(5Z,8Z,12E,14Z)-eicosatetraenoyl]-sn-glycero-3-phosphocholine + A + H2O. It carries out the reaction (9Z,12Z)-octadecadienoate + AH2 + O2 = 9-hydroxy-(10E,12Z)-octadecadienoate + A + H2O. The enzyme catalyses (9Z,12Z)-octadecadienoate + AH2 + O2 = 13-hydroxy-(9Z,11E)-octadecadienoate + A + H2O. The catalysed reaction is (5Z,8Z,11Z,14Z)-eicosatetraenoate + AH2 + O2 = (15R)-hydroxy-(5Z,8Z,11Z,13E)-eicosatetraenoate + A + H2O. It catalyses the reaction (5Z,8Z,11Z,14Z)-eicosatetraenoate + AH2 + O2 = (11R)-hydroxy-(5Z,8Z,12E,14Z)-eicosatetraenoate + A + H2O. It carries out the reaction (5Z,8Z,11Z,14Z,17Z)-eicosapentaenoate + AH2 + O2 = (11R)-hydroxy-(5Z,8Z,12E,14Z,17Z)-eicosapentaenoate + A + H2O. The enzyme catalyses (5Z,8Z,11Z,14Z,17Z)-eicosapentaenoate + AH2 + O2 = (18S)-hydroxy-(5Z,8Z,11Z,14Z,16E)-eicosapentaenoate + A + H2O. The catalysed reaction is (5Z,8Z,11Z,14Z,17Z)-eicosapentaenoate + AH2 + O2 = (18R)-hydroxy-(5Z,8Z,11Z,14Z,16E)-eicosapentaenoate + A + H2O. It catalyses the reaction (5Z,8Z,11Z,14Z,17Z)-eicosapentaenoate + AH2 + O2 = (15R)-hydroxy-(5Z,8Z,11Z,13E,17Z)-eicosapentaenoate + A + H2O. It carries out the reaction (5Z,8Z,11Z,14Z,17Z)-eicosapentaenoate + AH2 + O2 = (15S)-hydroxy-(5Z,8Z,11Z,13E,17Z)-eicosapentaenoate + A + H2O. The enzyme catalyses (7Z,10Z,13Z,16Z,19Z)-docosapentaenoate + AH2 + O2 = 13R-hydroxy-(7Z,10Z,14E,16Z,19Z)-docosapentaenoate + A + H2O. The catalysed reaction is (4Z,7Z,10Z,13Z,16Z,19Z)-docosahexaenoate + AH2 + O2 = 13-hydroxy-(4Z,7Z,10Z,14E,16Z,19Z)-docosahexaenoate + A + H2O. It catalyses the reaction (5S)-hydroxy-(6E,8Z,11Z,14Z)-eicosatetraenoate + AH2 + O2 = (5S,15R)-dihydroxy-(6E,8Z,11Z,13E)-eicosatetraenoate + A + H2O. It carries out the reaction (4Z,7Z,10Z,13Z,16Z,19Z)-docosahexaenoate + AH2 + O2 = 17R-hydroxy-(4Z,7Z,10Z,13Z,15E,19Z)-docosahexaenoate + A + H2O. The enzyme catalyses (5S)-hydroxy-(6E,8Z,11Z,14Z)-eicosatetraenoate + AH2 + O2 = (5S,15S)-dihydroxy-(6E,8Z,11Z,13E)-eicosatetraenoate + A + H2O. The catalysed reaction is (5S)-hydroxy-(6E,8Z,11Z,14Z)-eicosatetraenoate + AH2 + O2 = (5S,11R)-dihydroxy-(6E,8Z,12E,14Z)-eicosatetraenoate + A + H2O. It catalyses the reaction 2-(5Z,8Z,11Z,14Z-eicosatetraenoyl)-glycerol + 2 O2 = 2-glyceryl-prostaglandin G2. It carries out the reaction 2-glyceryl-prostaglandin G2 + AH2 = 2-glyceryl-prostaglandin H2 + A + H2O. The enzyme catalyses (5Z,8Z,11Z,14Z)-eicosatetraenoate + O2 = (15R)-hydroperoxy-(5Z,8Z,11Z,13E)-eicosatetraenoate. The catalysed reaction is (5Z,8Z,11Z,14Z)-eicosatetraenoate + O2 = 11R-hydroperoxy-(5Z,8Z,12E,14Z)-eicosatetraenoate. It catalyses the reaction (9Z,12Z)-octadecadienoate + AH2 + O2 = (9R)-hydroxy-(10E,12Z)-octadecadienoate + A + H2O. It carries out the reaction (9Z,12Z)-octadecadienoate + AH2 + O2 = (9S)-hydroxy-(10E,12Z)-octadecadienoate + A + H2O. The enzyme catalyses (9Z,12Z)-octadecadienoate + AH2 + O2 = (13S)-hydroxy-(9Z,11E)-octadecadienoate + A + H2O. The catalysed reaction is (9Z,12Z)-octadecadienoate + AH2 + O2 = (13R)-hydroxy-(9Z,11E)-octadecadienoate + A + H2O. The protein operates within lipid metabolism; prostaglandin biosynthesis. Dual cyclooxygenase and peroxidase in the biosynthesis pathway of prostanoids, a class of C20 oxylipins mainly derived from arachidonate ((5Z,8Z,11Z,14Z)-eicosatetraenoate, AA, C20:4(n-6)), with a particular role in the inflammatory response. The cyclooxygenase activity oxygenates AA to the hydroperoxy endoperoxide prostaglandin G2 (PGG2), and the peroxidase activity reduces PGG2 to the hydroxy endoperoxide prostaglandin H2 (PGH2), the precursor of all 2-series prostaglandins and thromboxanes. This complex transformation is initiated by abstraction of hydrogen at carbon 13 (with S-stereochemistry), followed by insertion of molecular O2 to form the endoperoxide bridge between carbon 9 and 11 that defines prostaglandins. The insertion of a second molecule of O2 (bis-oxygenase activity) yields a hydroperoxy group in PGG2 that is then reduced to PGH2 by two electrons. Similarly catalyzes successive cyclooxygenation and peroxidation of dihomo-gamma-linoleate (DGLA, C20:3(n-6)) and eicosapentaenoate (EPA, C20:5(n-3)) to corresponding PGH1 and PGH3, the precursors of 1- and 3-series prostaglandins. In an alternative pathway of prostanoid biosynthesis, converts 2-arachidonoyl lysophopholipids to prostanoid lysophopholipids, which are then hydrolyzed by intracellular phospholipases to release free prostanoids. Metabolizes 2-arachidonoyl glycerol yielding the glyceryl ester of PGH2, a process that can contribute to pain response. Generates lipid mediators from n-3 and n-6 polyunsaturated fatty acids (PUFAs) via a lipoxygenase-type mechanism. Oxygenates PUFAs to hydroperoxy compounds and then reduces them to corresponding alcohols. Plays a role in the generation of resolution phase interaction products (resolvins) during both sterile and infectious inflammation. Metabolizes docosahexaenoate (DHA, C22:6(n-3)) to 17R-HDHA, a precursor of the D-series resolvins (RvDs). As a component of the biosynthetic pathway of E-series resolvins (RvEs), converts eicosapentaenoate (EPA, C20:5(n-3)) primarily to 18S-HEPE that is further metabolized by ALOX5 and LTA4H to generate 18S-RvE1 and 18S-RvE2. In vascular endothelial cells, converts docosapentaenoate (DPA, C22:5(n-3)) to 13R-HDPA, a precursor for 13-series resolvins (RvTs) shown to activate macrophage phagocytosis during bacterial infection. In activated leukocytes, contributes to oxygenation of hydroxyeicosatetraenoates (HETE) to diHETES (5,15-diHETE and 5,11-diHETE). Can also use linoleate (LA, (9Z,12Z)-octadecadienoate, C18:2(n-6)) as substrate and produce hydroxyoctadecadienoates (HODEs) in a regio- and stereospecific manner, being (9R)-HODE ((9R)-hydroxy-(10E,12Z)-octadecadienoate) and (13S)-HODE ((13S)-hydroxy-(9Z,11E)-octadecadienoate) its major products. During neuroinflammation, plays a role in neuronal secretion of specialized preresolving mediators (SPMs) 15R-lipoxin A4 that regulates phagocytic microglia. In Neovison vison (American mink), this protein is Prostaglandin G/H synthase 2 (PTGS2).